Reading from the N-terminus, the 293-residue chain is DNA-directed RNA polymerase III subunit rpc6 (293 aa).

The protein belongs to the eukaryotic RPC34/RPC39 RNA polymerase subunit family. As to quaternary structure, component of the RNA polymerase III (Pol III) complex.

The protein localises to the nucleus. DNA-dependent RNA polymerase catalyzes the transcription of DNA into RNA using the four ribonucleoside triphosphates as substrates. Specific peripheric component of RNA polymerase III which synthesizes small RNAs, such as 5S rRNA and tRNAs. May direct RNA Pol III binding to the TFIIIB-DNA complex. This is DNA-directed RNA polymerase III subunit rpc6 (polr3f) from Dictyostelium discoideum (Social amoeba).